Consider the following 247-residue polypeptide: NAD(P)H-quinone oxidoreductase subunit K (247 aa).

[4Fe-4S] cluster-binding residues include C63, C64, C128, and C159. The segment at 218–247 is disordered; the sequence is TRQAPPKELTEAIGMEVPPALASQKQKEEA.

The protein belongs to the complex I 20 kDa subunit family. As to quaternary structure, NDH-1 can be composed of about 15 different subunits; different subcomplexes with different compositions have been identified which probably have different functions. [4Fe-4S] cluster serves as cofactor.

It localises to the cellular thylakoid membrane. The catalysed reaction is a plastoquinone + NADH + (n+1) H(+)(in) = a plastoquinol + NAD(+) + n H(+)(out). It catalyses the reaction a plastoquinone + NADPH + (n+1) H(+)(in) = a plastoquinol + NADP(+) + n H(+)(out). NDH-1 shuttles electrons from an unknown electron donor, via FMN and iron-sulfur (Fe-S) centers, to quinones in the respiratory and/or the photosynthetic chain. The immediate electron acceptor for the enzyme in this species is believed to be plastoquinone. Couples the redox reaction to proton translocation, and thus conserves the redox energy in a proton gradient. Cyanobacterial NDH-1 also plays a role in inorganic carbon-concentration. The protein is NAD(P)H-quinone oxidoreductase subunit K of Crocosphaera subtropica (strain ATCC 51142 / BH68) (Cyanothece sp. (strain ATCC 51142)).